The primary structure comprises 214 residues: EEF1A lysine methyltransferase 1 (214 aa).

The residue at position 2 (Ser2) is an N-acetylserine. Ser2 bears the Phosphoserine mark.

The protein belongs to the class I-like SAM-binding methyltransferase superfamily. EFM5 family.

It is found in the cytoplasm. It catalyses the reaction L-lysyl-[protein] + 3 S-adenosyl-L-methionine = N(6),N(6),N(6)-trimethyl-L-lysyl-[protein] + 3 S-adenosyl-L-homocysteine + 3 H(+). Protein N-lysine methyltransferase that selectively catalyzes the trimethylation of EEF1A at 'Lys-79'. The sequence is that of EEF1A lysine methyltransferase 1 from Homo sapiens (Human).